We begin with the raw amino-acid sequence, 439 residues long: Dolichyl-diphosphooligosaccharide--protein glycosyltransferase 48 kDa subunit (439 aa).

A signal peptide spans 1–26 (MATRAARVWSGWWLLLLPLLGLAGAS). At 27-409 (GPRTLVLLDN…QYERFIPSAY (383 aa)) the chain is on the lumenal side. The chain crosses the membrane as a helical span at residues 410–430 (PYYASAFSMMLGLFIFSVVFL). The Cytoplasmic portion of the chain corresponds to 431 to 439 (HMKEKEKSD).

It belongs to the DDOST 48 kDa subunit family. Component of the oligosaccharyltransferase (OST) complex. OST exists in two different complex forms which contain common core subunits RPN1, RPN2, OST48, OST4, DAD1 and TMEM258, either STT3A or STT3B as catalytic subunits, and form-specific accessory subunits. STT3A complex assembly occurs through the formation of 3 subcomplexes. Subcomplex 1 contains RPN1 and TMEM258, subcomplex 2 contains the STT3A-specific subunits STT3A, DC2/OSTC, and KCP2 as well as the core subunit OST4, and subcomplex 3 contains RPN2, DAD1, and OST48. The STT3A complex can form stable complexes with the Sec61 complex or with both the Sec61 and TRAP complexes. Interacts with SMIM22.

The protein resides in the endoplasmic reticulum membrane. The protein operates within protein modification; protein glycosylation. Its function is as follows. Subunit of the oligosaccharyl transferase (OST) complex that catalyzes the initial transfer of a defined glycan (Glc(3)Man(9)GlcNAc(2) in eukaryotes) from the lipid carrier dolichol-pyrophosphate to an asparagine residue within an Asn-X-Ser/Thr consensus motif in nascent polypeptide chains, the first step in protein N-glycosylation. N-glycosylation occurs cotranslationally and the complex associates with the Sec61 complex at the channel-forming translocon complex that mediates protein translocation across the endoplasmic reticulum (ER). All subunits are required for a maximal enzyme activity. Required for the assembly of both SST3A- and SS3B-containing OST complexes. The polypeptide is Dolichyl-diphosphooligosaccharide--protein glycosyltransferase 48 kDa subunit (Bos taurus (Bovine)).